The primary structure comprises 169 residues: Calcium-binding protein G (169 aa).

EF-hand domains lie at 9-44, 60-83, 92-127, and 133-162; these read KIFQ…KMNG, VDMD…QAKK, AALA…QGYN, and DYVL…KRLA. Residues D105, D107, D109, K111, E116, D140, D142, D144, Y146, and E151 each contribute to the Ca(2+) site.

The chain is Calcium-binding protein G (cbpG) from Dictyostelium discoideum (Social amoeba).